The chain runs to 588 residues: Oxidoreductase NdmD (588 aa).

Positions 9-114 (WFPIATTEDL…VREKHGFIWT (106 aa)) constitute a Rieske domain. Residues Cys50, His52, Cys69, and His72 each contribute to the [2Fe-2S] cluster site. In terms of domain architecture, FAD-binding FR-type spans 272-373 (PTHYICEVVT…TLPRNGFPLV (102 aa)). Residues 503-588 (YEVELKKTGQ…CKSKKIVLDL (86 aa)) enclose the 2Fe-2S ferredoxin-type domain. Cys537, Cys542, Cys545, and Cys575 together coordinate [2Fe-2S] cluster.

Requires [2Fe-2S] cluster as cofactor.

Involved in the caffeine degradation, which is the essential first step for assimilating the carbon and nitrogen in caffeine. Catalyzes the oxidation of NADH and transfers electrons to NdmA and NdmB, which catalyze the N-demethylation reactions. This is Oxidoreductase NdmD (ndmD) from Pseudomonas putida (Arthrobacter siderocapsulatus).